Reading from the N-terminus, the 837-residue chain is Mannosyl-oligosaccharide glucosidase (837 aa).

Residues 1 to 10 (MARGERRRRA) show a composition bias toward basic residues. Topologically, residues 1 to 38 (MARGERRRRAVPAEGVRTAERAARGGPGRRDGRGGGPR) are cytoplasmic. The interval 1 to 39 (MARGERRRRAVPAEGVRTAERAARGGPGRRDGRGGGPRS) is disordered. Residues 3-9 (RGERRRR) carry the Endoplasmic reticulum targeting motif. The span at 17–33 (RTAERAARGGPGRRDGR) shows a compositional bias: basic and acidic residues. The helical; Signal-anchor for type II membrane protein transmembrane segment at 39–59 (STAGGVALAVVVLSLALGMSG) threads the bilayer. Topologically, residues 60-837 (RWVLAWYRAR…LVLLAMAEDY (778 aa)) are lumenal. The segment at 76–137 (SAPPVLPADS…PGTPKLRHTC (62 aa)) is required for endoplasmic reticulum targeting. Catalysis depends on Asp-583, which acts as the Proton donor. An N-linked (GlcNAc...) asparagine glycan is attached at Asn-657. The active-site Proton acceptor is Glu-807.

The protein belongs to the glycosyl hydrolase 63 family.

The protein localises to the endoplasmic reticulum membrane. The enzyme catalyses N(4)-(alpha-D-Glc-(1-&gt;2)-alpha-D-Glc-(1-&gt;3)-alpha-D-Glc-(1-&gt;3)-alpha-D-Man-(1-&gt;2)-alpha-D-Man-(1-&gt;2)-alpha-D-Man-(1-&gt;3)-[alpha-D-Man-(1-&gt;2)-alpha-D-Man-(1-&gt;3)-[alpha-D-Man-(1-&gt;2)-alpha-D-Man-(1-&gt;6)]-alpha-D-Man-(1-&gt;6)]-beta-D-Man-(1-&gt;4)-beta-D-GlcNAc-(1-&gt;4)-beta-D-GlcNAc)-L-asparaginyl-[protein] + H2O = N(4)-(alpha-D-Glc-(1-&gt;3)-alpha-D-Glc-(1-&gt;3)-alpha-D-Man-(1-&gt;2)-alpha-D-Man-(1-&gt;2)-alpha-D-Man-(1-&gt;3)-[alpha-D-Man-(1-&gt;2)-alpha-D-Man-(1-&gt;3)-[alpha-D-Man-(1-&gt;2)-alpha-D-Man-(1-&gt;6)]-alpha-D-Man-(1-&gt;6)]-beta-D-Man-(1-&gt;4)-beta-D-GlcNAc-(1-&gt;4)-beta-D-GlcNAc)-L-asparaginyl-[protein] + beta-D-glucose. It functions in the pathway glycan metabolism; N-glycan degradation. Its activity is regulated as follows. Inhibited by 1-deoxynojirimycin (40% inhibition) and N,N-dimethyl-deoxynojirimycin (85% inhibition). Functionally, in the context of N-glycan degradation, cleaves the distal alpha 1,2-linked glucose residue from the Glc(3)Man(9)GlcNAc(2) oligosaccharide precursor in a highly specific manner. This is Mannosyl-oligosaccharide glucosidase from Homo sapiens (Human).